The primary structure comprises 406 residues: Isocitrate dehydrogenase [NADP] (406 aa).

NADP(+) is bound by residues lysine 72, threonine 75, threonine 77, and arginine 82. The D-threo-isocitrate site is built by serine 94, asparagine 96, arginine 100, glutamate 110, and arginine 132. Residues aspartate 250, aspartate 273, and aspartate 277 each contribute to the Mn(2+) site. Glycine 308, threonine 309, valine 310, histidine 313, and asparagine 326 together coordinate NADP(+).

This sequence belongs to the isocitrate and isopropylmalate dehydrogenases family. Homodimer. Mg(2+) serves as cofactor. It depends on Mn(2+) as a cofactor.

It catalyses the reaction D-threo-isocitrate + NADP(+) = 2-oxoglutarate + CO2 + NADPH. Its function is as follows. Catalyzes the oxidative decarboxylation of isocitrate to 2-oxoglutarate and carbon dioxide with the concomitant reduction of NADP(+). The polypeptide is Isocitrate dehydrogenase [NADP] (icd) (Sphingobium yanoikuyae (Sphingomonas yanoikuyae)).